A 255-amino-acid polypeptide reads, in one-letter code: Hydroxyacylglutathione hydrolase (255 aa).

Residues His56, His58, Asp60, His61, His114, Asp133, and His171 each contribute to the Zn(2+) site.

The protein belongs to the metallo-beta-lactamase superfamily. Glyoxalase II family. Monomer. Zn(2+) serves as cofactor.

The catalysed reaction is an S-(2-hydroxyacyl)glutathione + H2O = a 2-hydroxy carboxylate + glutathione + H(+). It participates in secondary metabolite metabolism; methylglyoxal degradation; (R)-lactate from methylglyoxal: step 2/2. Functionally, thiolesterase that catalyzes the hydrolysis of S-D-lactoyl-glutathione to form glutathione and D-lactic acid. The chain is Hydroxyacylglutathione hydrolase from Cereibacter sphaeroides (strain ATCC 17025 / ATH 2.4.3) (Rhodobacter sphaeroides).